A 479-amino-acid chain; its full sequence is UDP-N-acetylmuramoyl-L-alanyl-D-glutamate--2,6-diaminopimelate ligase (479 aa).

Ser21 is a UDP-N-acetyl-alpha-D-muramoyl-L-alanyl-D-glutamate binding site. An ATP-binding site is contributed by 98–104 (GTNGKSS). UDP-N-acetyl-alpha-D-muramoyl-L-alanyl-D-glutamate contacts are provided by residues 144-145 (TT), Ser171, Gln177, and Arg179. Lys211 is subject to N6-carboxylysine. Meso-2,6-diaminopimelate contacts are provided by residues Arg372, 396 to 399 (DNPR), Gly446, and Glu450. The Meso-diaminopimelate recognition motif motif lies at 396 to 399 (DNPR).

It belongs to the MurCDEF family. MurE subfamily. Mg(2+) is required as a cofactor. Carboxylation is probably crucial for Mg(2+) binding and, consequently, for the gamma-phosphate positioning of ATP.

Its subcellular location is the cytoplasm. The enzyme catalyses UDP-N-acetyl-alpha-D-muramoyl-L-alanyl-D-glutamate + meso-2,6-diaminopimelate + ATP = UDP-N-acetyl-alpha-D-muramoyl-L-alanyl-gamma-D-glutamyl-meso-2,6-diaminopimelate + ADP + phosphate + H(+). The protein operates within cell wall biogenesis; peptidoglycan biosynthesis. Functionally, catalyzes the addition of meso-diaminopimelic acid to the nucleotide precursor UDP-N-acetylmuramoyl-L-alanyl-D-glutamate (UMAG) in the biosynthesis of bacterial cell-wall peptidoglycan. This is UDP-N-acetylmuramoyl-L-alanyl-D-glutamate--2,6-diaminopimelate ligase from Rickettsia conorii (strain ATCC VR-613 / Malish 7).